The following is a 92-amino-acid chain: Small ribosomal subunit protein uS19c (92 aa).

It belongs to the universal ribosomal protein uS19 family.

The protein resides in the plastid. It localises to the chloroplast. Protein S19 forms a complex with S13 that binds strongly to the 16S ribosomal RNA. In Daucus carota (Wild carrot), this protein is Small ribosomal subunit protein uS19c.